The chain runs to 262 residues: RNA-binding protein 7 (262 aa).

Glycine 2 carries the post-translational modification N-acetylglycine. Residues 10-87 (RTLFVGNLET…RPIKIQFRAG (78 aa)) form the RRM domain. ZCCHC8 binding stretches follow at residues 25–35 (LLFELFHQAGP) and 59–76 (HEVSVPYAMNLLNGIKLF). Residues 95–121 (VSLSYPQHHVGNSSPTSTSPSRTVDNM) are disordered. A phosphoserine mark is found at serine 133 and serine 134. Arginine 149 carries the omega-N-methylarginine modification. 2 disordered regions span residues 159–212 (SPHL…HYSR) and 242–262 (SHDYDNRRDSGRNGKWRSSRH). Positions 165–194 (SGFSPSAQSHNHTFNQSSSSQWRQDTPSSQ) are enriched in polar residues. At serine 201 the chain carries Phosphoserine. Positions 242 to 253 (SHDYDNRRDSGR) are enriched in basic and acidic residues.

In terms of assembly, component of the nuclear exosome targeting (NEXT) complex composed of MTREX, ZCCHC8, and RBM7 that directs a subset of non-coding short-lived RNAs for exosomal degradation. Interacts with ZCCHC8 and SF3B2/SAP145. Binds to MTREX through ZCCHC8. Interacts with YWHAE and YWHAZ; these interactions are stress-dependent and RBM7 phosphorylation dependent; release RNA from the NEXT complex and may affect RNA targeting to the nuclear RNA exosomome for degradation. Interacts with MEPCE and LARP7, the core subunits of 7SK snRNP; upon genotoxic stress this interaction is enhanced, triggering the release of inactive P-TEFb complex from the core and P-TEFb complex activation. In terms of processing, phosphorylated at Ser-133 by MAPK14/p38-alpha-activated MAPKAPK2/MK2; this phosphorylation is stress-dependent; this phosphorylation decreases its RNA-binding capacity therefore affecting RNA nuclear exosome-mediated degradation. This phosphorylation mediates YWHAE and YWHAZ interactions.

Its subcellular location is the nucleus. It is found in the nucleoplasm. Its function is as follows. RNA-binding subunit of the trimeric nuclear exosome targeting (NEXT) complex, a complex that functions as an RNA exosome cofactor that directs a subset of non-coding short-lived RNAs for exosomal degradation. NEXT is involved in surveillance and turnover of aberrant transcripts and non-coding RNAs. Binds preferentially polyuridine sequences and associates with newly synthesized RNAs, including pre-mRNAs and short-lived exosome substrates such as promoter upstream transcripts (PROMPTs), enhancer RNAs (eRNAs), and 3'-extended products from small nuclear RNAs (snRNAs). Participates in several biological processes including DNA damage response (DDR) and stress response. During stress response, activation of the p38MAPK-MK2 pathway decreases RBM7-RNA-binding and subsequently the RNA exosome degradation activities, thereby modulating the turnover of non-coding transcriptome. Participates in DNA damage response (DDR), through its interaction with MEPCE and LARP7, the core subunits of 7SK snRNP complex, that release the positive transcription elongation factor b (P-TEFb) complex from the 7SK snRNP. In turn, activation of P-TEFb complex induces the transcription of P-TEFb-dependent DDR genes to promote cell viability. This Bos taurus (Bovine) protein is RNA-binding protein 7.